A 265-amino-acid polypeptide reads, in one-letter code: Asparagine-rich protein (265 aa).

The first 21 residues, 1-21 (MSRLTLLVLLVIAAVIQKVHG), serve as a signal peptide directing secretion. Disordered regions lie at residues 20–71 (HGQG…NRNI) and 88–183 (SNQN…NQQY). Basic and acidic residues-rich tracts occupy residues 22-35 (QGRE…HEPG) and 44-55 (EKTERNLREPNR). Positions 88–98 (SNQNNFGNNRS) are enriched in low complexity. A compositionally biased stretch (basic and acidic residues) spans 115 to 124 (NKSEVEKENG). Positions 152–166 (KVQHRIAKRFQKRHP) are enriched in basic residues.

Nacreous layer of shell (at protein level). Expressed primarily in the mantle with highest level in the mantle pallium and lower level in the mantle edge.

The protein resides in the secreted. The chain is Asparagine-rich protein from Pinctada maxima (Silver-lipped pearl oyster).